Consider the following 335-residue polypeptide: MATNVVLDFERPVVELEAKLNEMRECLRSSSREQAPVESDALSKEIETLEKKVDALRRSIYKNLTRWQKVQLARHPERPYTLDYIYMMTCDFVELAGDRHFSDDKAIVGGFARLEDRASGYSQPVMVIGHQKGRDTKSNLYRNFGMAQPEGYRKALRLMKLAEKFRKPVITLIDTPGAFPGIEAEERGQAEAIARNLYEMAKLTVPVIVVIIGEGASGGAIGLGVGDRILMAENSWYSVISPESCSSILWRSWNYKEQAAEALQLTAEDLLKQGIIDRIIPEPMGGAHTDPEAMASTLKGMLIEELKALMPVPEKELVNNRIEKFSAMGVWNDEG.

The region spanning 48–308 (TLEKKVDALR…KGMLIEELKA (261 aa)) is the CoA carboxyltransferase C-terminal domain.

This sequence belongs to the AccA family. In terms of assembly, acetyl-CoA carboxylase is a heterohexamer composed of biotin carboxyl carrier protein (AccB), biotin carboxylase (AccC) and two subunits each of ACCase subunit alpha (AccA) and ACCase subunit beta (AccD).

It is found in the cytoplasm. It carries out the reaction N(6)-carboxybiotinyl-L-lysyl-[protein] + acetyl-CoA = N(6)-biotinyl-L-lysyl-[protein] + malonyl-CoA. Its pathway is lipid metabolism; malonyl-CoA biosynthesis; malonyl-CoA from acetyl-CoA: step 1/1. Its function is as follows. Component of the acetyl coenzyme A carboxylase (ACC) complex. First, biotin carboxylase catalyzes the carboxylation of biotin on its carrier protein (BCCP) and then the CO(2) group is transferred by the carboxyltransferase to acetyl-CoA to form malonyl-CoA. This is Acetyl-coenzyme A carboxylase carboxyl transferase subunit alpha from Chlorobium luteolum (strain DSM 273 / BCRC 81028 / 2530) (Pelodictyon luteolum).